The chain runs to 148 residues: Probable 4-amino-4-deoxy-L-arabinose-phosphoundecaprenol flippase subunit ArnF (148 aa).

Residues 1–23 are Cytoplasmic-facing; the sequence is MRGDNTGVGKEPAVTERPAIKGY. The helical transmembrane segment at 24–44 threads the bilayer; the sequence is LYVLGSILLVTLAQLAMKWGV. The Periplasmic segment spans residues 45 to 63; it reads MQLPAWQASLDIMLAHPVP. A helical transmembrane segment spans residues 64–84; it reads LLVITAGVGCYALSLLCWLAA. The Cytoplasmic portion of the chain corresponds to 85–91; the sequence is LHFTPLN. A helical membrane pass occupies residues 92–112; sequence IAYPLLSTSYALVYLLAVSIP. The Periplasmic portion of the chain corresponds to 113–117; sequence SFAEP. Residues 118 to 138 form a helical membrane-spanning segment; the sequence is LEPGKAVGVIFILLGAVLVGI. At 139–148 the chain is on the cytoplasmic side; the sequence is KPVGRKRNAH.

This sequence belongs to the ArnF family. As to quaternary structure, heterodimer of ArnE and ArnF.

Its subcellular location is the cell inner membrane. The protein operates within bacterial outer membrane biogenesis; lipopolysaccharide biosynthesis. In terms of biological role, translocates 4-amino-4-deoxy-L-arabinose-phosphoundecaprenol (alpha-L-Ara4N-phosphoundecaprenol) from the cytoplasmic to the periplasmic side of the inner membrane. This Aeromonas salmonicida (strain A449) protein is Probable 4-amino-4-deoxy-L-arabinose-phosphoundecaprenol flippase subunit ArnF.